The chain runs to 195 residues: Alkyl hydroperoxide reductase C (195 aa).

Residues 4-170 (LTIGDQFPEY…VLRVLDALQS (167 aa)) enclose the Thioredoxin domain. Residue lysine 41 forms an Isoglutamyl lysine isopeptide (Lys-Gln) (interchain with Q-Cter in protein Pup) linkage. Catalysis depends on cysteine 61, which acts as the Cysteine sulfenic acid (-SOH) intermediate.

This sequence belongs to the peroxiredoxin family. AhpC/Prx1 subfamily. As to quaternary structure, homodimer; disulfide-linked, upon oxidation. 6 homodimers assemble to form a ring-like dodecamer. Identified in a complex with AhpD, DlaT and Lpd.

Its subcellular location is the cytoplasm. The catalysed reaction is N(6)-[(R)-dihydrolipoyl]-L-lysyl-[lipoyl-carrier protein] + a hydroperoxide = N(6)-[(R)-lipoyl]-L-lysyl-[lipoyl-carrier protein] + an alcohol + H2O. In terms of biological role, thiol-specific peroxidase that catalyzes the reduction of hydrogen peroxide and organic hydroperoxides to water and alcohols, respectively. Plays a role in cell protection against oxidative stress by detoxifying peroxides. Together with AhpD, DlaT and Lpd, constitutes an NADH-dependent peroxidase active against hydrogen and alkyl peroxides as well as serving as a peroxynitrite reductase, thus protecting the bacterium against reactive nitrogen intermediates and oxidative stress generated by the host immune system. Does not however seem to play a role in detoxification of isoniazid. This Mycolicibacterium smegmatis (strain ATCC 700084 / mc(2)155) (Mycobacterium smegmatis) protein is Alkyl hydroperoxide reductase C.